Consider the following 384-residue polypeptide: Acetylornithine aminotransferase (384 aa).

Pyridoxal 5'-phosphate-binding positions include 95–96 (GA) and Phe-122. Arg-125 provides a ligand contact to N(2)-acetyl-L-ornithine. A pyridoxal 5'-phosphate-binding site is contributed by 207-210 (DEIQ). Lys-236 carries the N6-(pyridoxal phosphate)lysine modification. Ser-264 is a N(2)-acetyl-L-ornithine binding site. A pyridoxal 5'-phosphate-binding site is contributed by Thr-265.

The protein belongs to the class-III pyridoxal-phosphate-dependent aminotransferase family. ArgD subfamily. Homodimer. The cofactor is pyridoxal 5'-phosphate.

The protein resides in the cytoplasm. It carries out the reaction N(2)-acetyl-L-ornithine + 2-oxoglutarate = N-acetyl-L-glutamate 5-semialdehyde + L-glutamate. Its pathway is amino-acid biosynthesis; L-arginine biosynthesis; N(2)-acetyl-L-ornithine from L-glutamate: step 4/4. The chain is Acetylornithine aminotransferase from Halalkalibacterium halodurans (strain ATCC BAA-125 / DSM 18197 / FERM 7344 / JCM 9153 / C-125) (Bacillus halodurans).